The sequence spans 161 residues: Protein UXT homolog (161 aa).

This sequence belongs to the UXT family.

The chain is Protein UXT homolog from Dictyostelium discoideum (Social amoeba).